The primary structure comprises 87 residues: MDALNSKEQQEFQKVVEQKQMKDFMRLYSNLVERCFTDCVNDFTTSKLTNKEQTCIMKCSEKFLKHSERVGQRFQEQNAALGQGLGR.

Met-1 is subject to N-acetylmethionine. The Twin CX3C motif motif lies at 35 to 59; sequence CFTDCVNDFTTSKLTNKEQTCIMKC. Intrachain disulfides connect Cys-35/Cys-59 and Cys-39/Cys-55.

Belongs to the small Tim family. As to quaternary structure, heterohexamer; composed of 3 copies of TIM9 and 3 copies of TIM10, named soluble 70 kDa complex. Associates with the TIM12 component of the TIM22 complex, whose core is composed of TIM18, TIM22 and TIM54. Interacts with the transmembrane regions of multi-pass transmembrane proteins in transit.

The protein localises to the mitochondrion inner membrane. It localises to the mitochondrion intermembrane space. Mitochondrial intermembrane chaperone that participates in the import and insertion of multi-pass transmembrane proteins into the mitochondrial inner membrane. Also required for the transfer of beta-barrel precursors from the TOM complex to the sorting and assembly machinery (SAM complex) of the outer membrane. Acts as a chaperone-like protein that protects the hydrophobic precursors from aggregation and guide them through the mitochondrial intermembrane space. Compared to TIM10, it may have a strong structural role. The protein is Mitochondrial import inner membrane translocase subunit TIM9 (TIM9) of Saccharomyces cerevisiae (strain ATCC 204508 / S288c) (Baker's yeast).